The following is a 261-amino-acid chain: MAADRGLAVRVIPCLDVDAGRVVKGVNFENLRDAGDPVELAAVYDAEGADELTFLDVTASSSGRSTMLDVVRRTAEQVFIPLTVGGGVRAVADVDALLRAGADKVSVNTAAIARPELLAELARQFGSQCIVLSVDARTVPQGEQPTPSGWEVTTHGGRRGTGIDAVEWATRGAELGVGEILLNSMDFDGTKAGFDLPMLRAVRGAVTVPVIASGGAGAVEHFAPAVHAGADAVLAASVFHFKELTIGQVKAAMAAEGITVR.

Residues Asp-16 and Asp-135 contribute to the active site.

It belongs to the HisA/HisF family. Heterodimer of HisH and HisF.

Its subcellular location is the cytoplasm. The enzyme catalyses 5-[(5-phospho-1-deoxy-D-ribulos-1-ylimino)methylamino]-1-(5-phospho-beta-D-ribosyl)imidazole-4-carboxamide + L-glutamine = D-erythro-1-(imidazol-4-yl)glycerol 3-phosphate + 5-amino-1-(5-phospho-beta-D-ribosyl)imidazole-4-carboxamide + L-glutamate + H(+). The protein operates within amino-acid biosynthesis; L-histidine biosynthesis; L-histidine from 5-phospho-alpha-D-ribose 1-diphosphate: step 5/9. In terms of biological role, IGPS catalyzes the conversion of PRFAR and glutamine to IGP, AICAR and glutamate. The HisF subunit catalyzes the cyclization activity that produces IGP and AICAR from PRFAR using the ammonia provided by the HisH subunit. The protein is Imidazole glycerol phosphate synthase subunit HisF of Mycobacterium sp. (strain JLS).